The primary structure comprises 466 residues: Small RNA degrading nuclease 2 (466 aa).

The region spanning 142–298 is the Exonuclease domain; it reads MIAIDCEMVL…HDAEAAMKLV (157 aa). Residues 426–466 form a disordered region; that stretch reads EENNASSKKRKRENHSKGTRDRRRCKPLSRRKQRSNVKRRR. Positions 445–466 are enriched in basic residues; that stretch reads RDRRRCKPLSRRKQRSNVKRRR.

It belongs to the REXO1/REXO3 family.

Its subcellular location is the nucleus. In terms of biological role, 3'-5' exonuclease degrading single-stranded small RNAs. The sequence is that of Small RNA degrading nuclease 2 (SDN2) from Arabidopsis thaliana (Mouse-ear cress).